The sequence spans 466 residues: Histidine--tRNA ligase (466 aa).

This sequence belongs to the class-II aminoacyl-tRNA synthetase family. As to quaternary structure, homodimer.

Its subcellular location is the cytoplasm. It carries out the reaction tRNA(His) + L-histidine + ATP = L-histidyl-tRNA(His) + AMP + diphosphate + H(+). The polypeptide is Histidine--tRNA ligase (Bifidobacterium longum subsp. infantis (strain ATCC 15697 / DSM 20088 / JCM 1222 / NCTC 11817 / S12)).